A 60-amino-acid polypeptide reads, in one-letter code: Large ribosomal subunit protein uL30 (60 aa).

Belongs to the universal ribosomal protein uL30 family. In terms of assembly, part of the 50S ribosomal subunit.

This chain is Large ribosomal subunit protein uL30, found in Verminephrobacter eiseniae (strain EF01-2).